The chain runs to 148 residues: PTS system fructose-like EIIA component (148 aa).

Positions 2–145 (AALTASCIDL…DQVLALLNQT (144 aa)) constitute a PTS EIIA type-2 domain. The active-site Tele-phosphohistidine intermediate is histidine 64. Histidine 64 is modified (phosphohistidine; by HPr).

It localises to the cytoplasm. Functionally, the phosphoenolpyruvate-dependent sugar phosphotransferase system (sugar PTS), a major carbohydrate active transport system, catalyzes the phosphorylation of incoming sugar substrates concomitantly with their translocation across the cell membrane. The enzyme II FrvAB PTS system is involved in fructose transport. The polypeptide is PTS system fructose-like EIIA component (Escherichia coli (strain K12)).